A 101-amino-acid chain; its full sequence is Small ribosomal subunit protein uS14 (101 aa).

The protein belongs to the universal ribosomal protein uS14 family. As to quaternary structure, part of the 30S ribosomal subunit. Contacts proteins S3 and S10.

Its function is as follows. Binds 16S rRNA, required for the assembly of 30S particles and may also be responsible for determining the conformation of the 16S rRNA at the A site. This is Small ribosomal subunit protein uS14 from Alteromonas mediterranea (strain DSM 17117 / CIP 110805 / LMG 28347 / Deep ecotype).